We begin with the raw amino-acid sequence, 371 residues long: tRNA-specific 2-thiouridylase MnmA (371 aa).

ATP-binding positions include 24–31 and Leu-50; that span reads AMSGGVDS. Cys-119 acts as the Nucleophile in catalysis. Cys-119 and Cys-215 are disulfide-bonded. Gly-143 is an ATP binding site. Positions 165–167 are interaction with tRNA; that stretch reads KDQ. The Cysteine persulfide intermediate role is filled by Cys-215.

The protein belongs to the MnmA/TRMU family.

The protein resides in the cytoplasm. It catalyses the reaction S-sulfanyl-L-cysteinyl-[protein] + uridine(34) in tRNA + AH2 + ATP = 2-thiouridine(34) in tRNA + L-cysteinyl-[protein] + A + AMP + diphosphate + H(+). Its function is as follows. Catalyzes the 2-thiolation of uridine at the wobble position (U34) of tRNA, leading to the formation of s(2)U34. The protein is tRNA-specific 2-thiouridylase MnmA of Neorickettsia sennetsu (strain ATCC VR-367 / Miyayama) (Ehrlichia sennetsu).